A 563-amino-acid chain; its full sequence is Eukaryotic translation initiation factor 3 subunit D-1 (563 aa).

Residues 98–167 (VQKPPHQRGR…GPPPKMRESS (70 aa)) are disordered. Residues 100–121 (KPPHQRGRFRNMRNSRSGRGRN) are compositionally biased toward basic residues. Phosphothreonine is present on T128. Residues 291–305 (EFDLLTVNESSVEPP) are RNA gate.

Belongs to the eIF-3 subunit D family. In terms of assembly, component of the eukaryotic translation initiation factor 3 (eIF-3) complex. The eIF-3 complex interacts with pix.

The protein resides in the cytoplasm. In terms of biological role, mRNA cap-binding component of the eukaryotic translation initiation factor 3 (eIF-3) complex, which is involved in protein synthesis of a specialized repertoire of mRNAs and, together with other initiation factors, stimulates binding of mRNA and methionyl-tRNAi to the 40S ribosome. The eIF-3 complex specifically targets and initiates translation of a subset of mRNAs involved in cell proliferation. In the eIF-3 complex, eif3d specifically recognizes and binds the 7-methylguanosine cap of a subset of mRNAs. The chain is Eukaryotic translation initiation factor 3 subunit D-1 from Drosophila grimshawi (Hawaiian fruit fly).